The chain runs to 523 residues: Sorting nexin-2 (523 aa).

Positions 1 to 104 (MAAEREPPPL…EPSPAVTPVT (104 aa)) are disordered. Low complexity-rich tracts occupy residues 27–48 (LFTS…TSLP) and 93–104 (SSEPSPAVTPVT). Ser97 bears the Phosphoserine mark. Phosphothreonine is present on residues Thr101 and Thr104. Ser117 and Ser119 each carry phosphoserine. One can recognise a PX domain in the interval 140–269 (FDIEIGVSDP…QFLESSELPR (130 aa)). A 1,2-diacyl-sn-glycero-3-phospho-(1D-myo-inositol-3-phosphate)-binding residues include Arg183, Ser185, Lys211, and Arg235. At Ser185 the chain carries Phosphoserine. The interaction with RhoG stretch occupies residues 260-523 (QFLESSELPR…AFLPEAKAIA (264 aa)). Ser277 is subject to Phosphoserine. Residues 278–295 (GAGILRMVNKAADAVNKM) are membrane-binding amphipathic helix. One can recognise a BAR domain in the interval 299–523 (MNESDAWFEE…AFLPEAKAIA (225 aa)). N6-acetyllysine is present on Lys473.

It belongs to the sorting nexin family. Predominantly forms heterodimers with BAR domain-containing sorting nexins SNX5, SNX6 and SNX32; can self-associate to form homodimers. The heterodimers are proposed to self-assemble into helical arrays on the membrane to stabilize and expand local membrane curvature underlying endosomal tubule formation. Thought to be a component of the originally described retromer complex (also called SNX-BAR retromer) which is a pentamer containing the heterotrimeric retromer cargo-selective complex (CSC), also described as vacuolar protein sorting subcomplex (VPS), and a heterodimeric membrane-deforming subcomplex formed between SNX1 or SNX2 and SNX5 or SNX6 (also called SNX-BAR subcomplex); the respective CSC and SNX-BAR subcomplexes associate with low affinity. Interacts with SNX5, SNX6, SNX32, VPS26A, VPS29, VPS35, FNBP1, KALRN, RHOG (GDP-bound form).

It localises to the early endosome membrane. Its subcellular location is the cell projection. It is found in the lamellipodium. Involved in several stages of intracellular trafficking. Interacts with membranes containing phosphatidylinositol 3-phosphate (PtdIns(3P)) or phosphatidylinositol 3,5-bisphosphate (PtdIns(3,5)P2). Acts in part as component of the retromer membrane-deforming SNX-BAR subcomplex. The SNX-BAR retromer mediates retrograde transport of cargo proteins from endosomes to the trans-Golgi network (TGN) and is involved in endosome-to-plasma membrane transport for cargo protein recycling. The SNX-BAR subcomplex functions to deform the donor membrane into a tubular profile called endosome-to-TGN transport carrier (ETC). Can sense membrane curvature and has in vitro vesicle-to-membrane remodeling activity. Required for retrograde endosome-to-TGN transport of TGN38. Promotes KALRN- and RHOG-dependent but retromer-independent membrane remodeling such as lamellipodium formation; the function is dependent on GEF activity of KALRN. The protein is Sorting nexin-2 (SNX2) of Pongo abelii (Sumatran orangutan).